We begin with the raw amino-acid sequence, 336 residues long: Foldase protein PrsA (336 aa).

The signal sequence occupies residues 1-22; it reads MKSAKKLLSVLCLGIFILTFTA. The N-palmitoyl cysteine moiety is linked to residue C23. C23 carries the S-diacylglycerol cysteine lipid modification. The PpiC domain maps to 194 to 286; it reads PNTMNVSHIL…FGYHIIKINS (93 aa).

This sequence belongs to the PrsA family.

It is found in the cell membrane. It carries out the reaction [protein]-peptidylproline (omega=180) = [protein]-peptidylproline (omega=0). Plays a major role in protein secretion by helping the post-translocational extracellular folding of several secreted proteins. This chain is Foldase protein PrsA, found in Clostridium botulinum (strain Okra / Type B1).